Consider the following 450-residue polypeptide: 3-phosphoshikimate 1-carboxyvinyltransferase (450 aa).

3 residues coordinate 3-phosphoshikimate: lysine 28, serine 29, and arginine 33. Position 28 (lysine 28) interacts with phosphoenolpyruvate. The phosphoenolpyruvate site is built by glycine 100 and arginine 128. Residues serine 173, glutamine 175, aspartate 326, and lysine 353 each contribute to the 3-phosphoshikimate site. Residue glutamine 175 participates in phosphoenolpyruvate binding. Residue aspartate 326 is the Proton acceptor of the active site. Phosphoenolpyruvate is bound by residues arginine 357 and arginine 402.

Belongs to the EPSP synthase family. As to quaternary structure, monomer.

It is found in the cytoplasm. It catalyses the reaction 3-phosphoshikimate + phosphoenolpyruvate = 5-O-(1-carboxyvinyl)-3-phosphoshikimate + phosphate. It functions in the pathway metabolic intermediate biosynthesis; chorismate biosynthesis; chorismate from D-erythrose 4-phosphate and phosphoenolpyruvate: step 6/7. Functionally, catalyzes the transfer of the enolpyruvyl moiety of phosphoenolpyruvate (PEP) to the 5-hydroxyl of shikimate-3-phosphate (S3P) to produce enolpyruvyl shikimate-3-phosphate and inorganic phosphate. This is 3-phosphoshikimate 1-carboxyvinyltransferase from Brucella melitensis biotype 2 (strain ATCC 23457).